A 712-amino-acid chain; its full sequence is Patatin-like phospholipase domain-containing protein AFUA_1G04970 (712 aa).

The segment covering 1–13 has biased composition (basic and acidic residues); that stretch reads MTSDEKSATRDIY. The disordered stretch occupies residues 1–20; the sequence is MTSDEKSATRDIYDPNTLPD. A helical transmembrane segment spans residues 85–105; that stretch reads WPFLFTVFAWITVLGFAYTLT. In terms of domain architecture, PNPLA spans 275-466; it reads LCLSGGATFA…RTDIPIKALN (192 aa). The GXSXG signature appears at 306-310; the sequence is GTSGG. S308 serves as the catalytic Nucleophile. The active-site Proton acceptor is the D453. The tract at residues 628–688 is disordered; sequence RRRQDRAQEH…PDARRSSMFE (61 aa). Composition is skewed to basic and acidic residues over residues 632 to 646 and 652 to 664; these read DRAQ…ERLD and RQSD…HYAE. A compositionally biased stretch (polar residues) spans 667–676; that stretch reads DSLSATSSRP. A compositionally biased stretch (basic and acidic residues) spans 677 to 688; sequence HTPDARRSSMFE.

This sequence belongs to the PLPL family.

The protein localises to the membrane. Probable lipid hydrolase. The sequence is that of Patatin-like phospholipase domain-containing protein AFUA_1G04970 from Aspergillus fumigatus (strain ATCC MYA-4609 / CBS 101355 / FGSC A1100 / Af293) (Neosartorya fumigata).